A 625-amino-acid polypeptide reads, in one-letter code: pH-response transcription factor pacC/RIM101 (625 aa).

Over residues 1–34 (MSSQDQQQQQQPAQTQTSTSSSSNNENATTATSS) the composition is skewed to low complexity. The tract at residues 1 to 35 (MSSQDQQQQQQPAQTQTSTSSSSNNENATTATSSI) is disordered. 3 C2H2-type zinc fingers span residues 45–70 (LLCQWEKCSERCPTPEALFDHICEKH), 81–105 (LTCGWNSCRTTTVKRDHITSHIRVH), and 111–133 (HKCEFCGKAFKRPQDLKKHVKTH). Positions 391 to 416 (APMTATHSSHSVSSGTPALTPPSSSV) are enriched in polar residues. Residues 391-440 (APMTATHSSHSVSSGTPALTPPSSSVSYTSGNSPMSSSGMSPISRHSSTS) are disordered. Positions 417–438 (SYTSGNSPMSSSGMSPISRHSS) are enriched in low complexity. The YPX[LI] motif 1 signature appears at 444-447 (YPNL). Disordered regions lie at residues 455–543 (SPHH…SPSV) and 584–625 (VKDE…DDDE). Polar residues-rich tracts occupy residues 461–472 (TAPTSTLGTNFD) and 490–514 (GLNSSQYRESMETSTVGSPTPSPKE). The short motif at 615 to 618 (YPVL) is the YPX[LI] motif 2 element.

Belongs to the pacC/RIM101 family. In terms of processing, activated by C-terminal proteolytic cleavage by signaling protease (probably palB/RIM13) at neutral to alkaline ambient pH.

It localises to the cytoplasm. The protein resides in the nucleus. Transcription factor that mediates regulation of both acid- and alkaline-expressed genes in response to ambient pH. At alkaline ambient pH, activates transcription of alkaline-expressed genes (including pac1 itself) and represses transcription of acid-expressed genes. In Sclerotinia sclerotiorum (White mold), this protein is pH-response transcription factor pacC/RIM101 (pac1).